The chain runs to 296 residues: MGIPSFLAFPAARRNRAHCTPWHPWGHMLLWTALLFLAPVSGKPDLPKAVVTIQPAWINVLREDHVTLTCQGTSFSAGNLTTWFHNGSSIHTQKQPSYSFRAGSNDSGSYRCQREQTSLSDPVHLDVISDWLLLQTPSLVFQEGEPIMLRCHSWRNQPLNKITFYQDRKSKIFSYQRTNFSIPRANLSHSGQYHCTAFIGKMLHSSQPVNITVQESSSSGPSSMTAVAIGTCFAAVAIVAAIITWFRLRRKPISAGLTDAENDAARTEAENTVTYSLLSHPDVAEEDSESDYQKRL.

The N-terminal stretch at 1-42 is a signal peptide; that stretch reads MGIPSFLAFPAARRNRAHCTPWHPWGHMLLWTALLFLAPVSG. The Extracellular portion of the chain corresponds to 43 to 225; the sequence is KPDLPKAVVT…SSSSGPSSMT (183 aa). 2 Ig-like C2-type domains span residues 47-129 and 130-212; these read PKAV…DVIS and DWLL…VNIT. Intrachain disulfides connect C70–C112 and C151–C195. N79, N86, N105, N179, N186, and N210 each carry an N-linked (GlcNAc...) asparagine glycan. A helical membrane pass occupies residues 226 to 246; that stretch reads AVAIGTCFAAVAIVAAIITWF. The Cytoplasmic segment spans residues 247–296; that stretch reads RLRRKPISAGLTDAENDAARTEAENTVTYSLLSHPDVAEEDSESDYQKRL. Positions 273–278 match the ITIM motif motif; sequence VTYSLL. Y275 is subject to Phosphotyrosine; by SRC-type Tyr-kinases. S288 is subject to Phosphoserine. Y292 is modified (phosphotyrosine).

As to quaternary structure, interacts with FGR and LYN. Post-translationally, phosphorylated by SRC-type Tyr-kinases such as LYN, BLK, FYN and SYK. Higher expression is found in macrophages than in neutrophils.

The protein resides in the cell membrane. Binds to the Fc region of immunoglobulins gamma. Low affinity receptor. This chain is Low affinity immunoglobulin gamma Fc region receptor II (FCGR2), found in Bos taurus (Bovine).